Here is a 345-residue protein sequence, read N- to C-terminus: MEAHNQFLKTFQKERHDMKEAEKDEILLMENSRRFVMFPIKYHEIWAAYKKVEASFWTAEEIELAKDTEDFQKLTDDQKTYIGNLLALSISSDNLVNKYLIENFSAQLQNPEGKSFYGFQIMMENIYSEVYSMMVDAFFKDPKNIPLFKEIANLPEVKHKAAFIERWISNDDSLYAERLVAFAAKEGIFQAGNYASMFWLTDKKIMPGLAMANRNICRDRGAYTDFSCLLFAHLRTKPNPKIIEKIITEAVEIEKEYYSNSLPVEKFGMDLKSIHTYIEFVADGLLQGFGNEKYYNAVNPFEFMEDVATAGKTTFFEKKVSDYQKASDMSKSATPSKEINFDDDF.

M1 carries the post-translational modification N-acetylmethionine. Residue Y131 is part of the active site. 2 positions are modified to phosphoserine: S169 and S332. Phosphothreonine is present on T334. S336 carries the phosphoserine modification. K337 participates in a covalent cross-link: Glycyl lysine isopeptide (Lys-Gly) (interchain with G-Cter in ubiquitin).

This sequence belongs to the ribonucleoside diphosphate reductase small chain family. In terms of assembly, heterotetramer of two large (R1) and two small (R2) subunits. S.cerevisiae has two different R1 subunits (RNR1 and RNR3) and two different R2 subunits (RNR2 and RNR4). The functional form of the small subunits is a RNR2-RNR4 heterodimer, where RNR2 provides the iron-radical center and RNR4 is required for proper folding of RNR2 and assembly with the large subunits. Under normal growth conditions, the active form of the large subunits is a homodimer of the constitutively expressed RNR1. In damaged cells or cells arrested for DNA synthesis, the reductase consists of multiple species because of the association of the small subunits (RNR2-RNR4) with either the RNR1 homodimer or a heterodimer of RNR1 and the damage-inducible RNR3. Interacts with DIF1.

The protein resides in the nucleus. It catalyses the reaction a 2'-deoxyribonucleoside 5'-diphosphate + [thioredoxin]-disulfide + H2O = a ribonucleoside 5'-diphosphate + [thioredoxin]-dithiol. Functionally, provides the precursors necessary for DNA synthesis. Catalyzes the biosynthesis of deoxyribonucleotides from the corresponding ribonucleotides. RNR4 is required for proper folding of RNR2 and assembly with the large subunits. This chain is Ribonucleoside-diphosphate reductase small chain 2 (RNR4), found in Saccharomyces cerevisiae (strain ATCC 204508 / S288c) (Baker's yeast).